A 2036-amino-acid chain; its full sequence is MFSKKPHGDVKKSTQKVLDTKKDALTRLKHLRIVIENAESIDLKQFFDQHFSHIYYVFFENFVTIEASLKQKGHKSQREELDAILFIFEKILQLLPERIHQRWQFHSIGLILKKLLHTGNSLKIRREGVRLFLLWLQALQNNCSKEQLWMFSCLIPGFSAPQSEHGPRTLDNLINPPLNLQETQVTIEEITPLVPPQSGDKGQEDLTSYFLEALLKYIVIQVKSLEWKNKENQERGFSFLFSHFKKYYLPYIFPNICKENSLYHPILDIPQMRPKPHYVVIKKDAETNEAIYCTKEPFIKARVIVIRWLVSFWLEPKPHTGPHIPGMEGEVLPKNIQRAAASLVSREESKNDNADKTDRTTEPEQSHSNTSTLTEREPSSSSLCSIDEEHLTDIEIVRRVFSSKRSNVNFVTEIFRQAFLLPICEAAAMRKVVKVYQEWIQQEEKPLFMQEPEEIVITSSDLPCIENVTDHDISMEEGEKREEENGTNTADHVRNSSWAKNGSYQGALHNASEEATEQNIRAGTQAVLQVFIINSSNIFLLEPANEIKNLLDEHTDMCKRILNIYRYMVVQVSMDKKTWEQMLLVLLRVTESVLKMPSQAFLQFQGKKNMTLAGRLAGPLFQTLIVAWIKANLNVYISRELWDDLLSVLSSLTYWEELATEWSLTMETLTKVLARNLYSLDLSDLPLDKLSEQKQKKHKGKGVGHEFQKVSVDKSFSRGWSRDQPGQAPMRQRSATTTGSPGTEKARSIVRQKTVDIDDAQILPRSTRVRHFSQSEETGNEVFGALNEEQPLPRSSSTSDILEPFTVERAKVNKEDMSQKLPPLNSDIGGSSANVPDLMDEFIAERLRSGNASTMTRRGSSPGSLEIPKDLPDILNKQNQMRPIDDPGVPSEWTSPASAGSSDLISSDSHSDSFSAFQYDGRKFDNFGFGTDTGVTSSADVDSGSGHHQSAEEQEVASLTTLHIDSETSSLNQQAFSAEVATITGSESASPVHSPLGSRSQTPSPSTLNIDHMEQKDLQLDEKLHHSVLQTPDDLEISEFPSECCSVMAGGTLTGWHADVATVMWRRMLGILGDVNSIMDPEIHAQVFDYLCELWQNLAKIRDNLGISTDNLTSPSPPVLIPPLRILTPWLFKATMLTDKYKQGKLHAYKLICNTMKRRQDVSPNRDFLTHFYNIMHCGLLHIDQDIVNTIIKHCSPQFFSLGLPGATMLIMDFIVAAGRVASSAFLNAPRVEAQVLLGSLVCFPNLYCELPSLHPNIPDVAVSQFTDVKELIIKTVLSSARDEPSGPARCVALCSLGIWICEELVHESHHPQIKEALNVICVSLKFTNKTVAHVACNMLHMLVHYVPRLQIYQPDSPLKIIQILIATITHLLPSTEASSYEMDKRLVVSLLLCLLDWIMALPLKTLLQPFHATGAESDKTEKSVLNCIYKVLHGCVYGAQCFSNPRYFPMSLSDLASVDYDPFMHLESLKEPEPLHSPDSERSSKLQPVTEVKTQMQHGLISIAARTVITHLVNHLGHYPMSGGPAMLTSQVCENHDNHYSESTELSPELFESPNIQFFVLNNTTLVSCIQIRSEENMPGGGLSAGLASANSNVRIIVRDLSGKYSWDSAILYGPPPVSGLSEPTSFMLSLSHQEKPEEPPTSNECLEDITVKDGLSLQFKRFRETVPTWDTIRDEEDVLDELLQYLGVTSPECLQRTGISLNIPAPQPVCISEKQENDVINAILKQHTEEKEFVEKHFNDLNMKAVEQDEPIPQKPQSAFYYCRLLLSILGMNSWDKRRSFHLLKKNEKLLRELRNLDSRQCRETHKIAVFYVAEGQEDKHSILTNTGGSQAYEDFVAGLGWEVNLTNHCGFMGGLQKNKSTGLTTPYFATSTVEVIFHVSTRMPSDSDDSLTKKLRHLGNDEVHIVWSEHTRDYRRGIIPTEFGDVLIVIYPMKNHMFSIQIMKKPEVPFFGPLFDGAIVNGKVLPIMVRATAINASRALKSLIPLYQNFYEERARYLQTIVQHHLEPTTFEDFAAQVFSPAPYHHLPSDADH.

Disordered regions lie at residues leucine 343 to cysteine 384 and glutamate 476 to serine 497. The segment covering serine 345–glutamine 365 has biased composition (basic and acidic residues). Composition is skewed to polar residues over residues serine 366–cysteine 384 and glycine 486–serine 497. Phosphoserine is present on residues serine 711 and serine 721. The disordered stretch occupies residues serine 715 to lysine 753. Threonine 754 bears the Phosphothreonine mark. A Phosphoserine modification is found at serine 773. Residue threonine 778 is modified to Phosphothreonine. A phosphoserine mark is found at serine 797, serine 860, serine 861, and serine 864. 2 disordered regions span residues serine 849–histidine 910 and threonine 982–asparagine 1009. Residues glycine 850–glycine 863 are compositionally biased toward polar residues. Residues serine 895 to histidine 910 show a composition bias toward low complexity. Positions isoleucine 983 to asparagine 1009 are enriched in polar residues. Serine 986, serine 990, serine 994, and serine 1000 each carry phosphoserine. Threonine 1002 is subject to Phosphothreonine. A phosphoserine mark is found at serine 1004 and serine 1478. Positions phenylalanine 1327–aspartate 2035 are minimal domain that binds to TCF3/E12. A coiled-coil region spans residues lysine 1716–asparagine 1744. One can recognise a Rap-GAP domain in the interval leucine 1796–isoleucine 2004.

In terms of assembly, component of the heterodimeric RalGAP1 complex with RALGAPB. Heterodimerization is required for activity. Interacts with the HLH region of TCF3/isoform E12. In terms of tissue distribution, widely expressed.

It is found in the cytoplasm. The protein resides in the nucleus. Catalytic subunit of the heterodimeric RalGAP1 complex which acts as a GTPase activator for the Ras-like small GTPases RALA and RALB. This chain is Ral GTPase-activating protein subunit alpha-1 (RALGAPA1), found in Homo sapiens (Human).